The primary structure comprises 170 residues: Putative 4-hydroxy-4-methyl-2-oxoglutarate aldolase (170 aa).

Residues 81–84 (GDII) and arginine 103 contribute to the substrate site. Aspartate 104 serves as a coordination point for a divalent metal cation.

The protein belongs to the class II aldolase/RraA-like family. As to quaternary structure, homotrimer. Requires a divalent metal cation as cofactor.

It carries out the reaction 4-hydroxy-4-methyl-2-oxoglutarate = 2 pyruvate. The catalysed reaction is oxaloacetate + H(+) = pyruvate + CO2. Functionally, catalyzes the aldol cleavage of 4-hydroxy-4-methyl-2-oxoglutarate (HMG) into 2 molecules of pyruvate. Also contains a secondary oxaloacetate (OAA) decarboxylase activity due to the common pyruvate enolate transition state formed following C-C bond cleavage in the retro-aldol and decarboxylation reactions. The sequence is that of Putative 4-hydroxy-4-methyl-2-oxoglutarate aldolase from Corynebacterium efficiens (strain DSM 44549 / YS-314 / AJ 12310 / JCM 11189 / NBRC 100395).